Reading from the N-terminus, the 208-residue chain is Glycerol-3-phosphate acyltransferase (208 aa).

Transmembrane regions (helical) follow at residues 3-23, 55-75, 81-101, 113-133, and 155-175; these read IIIM…VIIG, IVMV…TLLF, YTLL…YIGF, ILLA…LLLV, and IFYY…LFIF.

It belongs to the PlsY family. As to quaternary structure, probably interacts with PlsX.

Its subcellular location is the cell membrane. The catalysed reaction is an acyl phosphate + sn-glycerol 3-phosphate = a 1-acyl-sn-glycero-3-phosphate + phosphate. Its pathway is lipid metabolism; phospholipid metabolism. Functionally, catalyzes the transfer of an acyl group from acyl-phosphate (acyl-PO(4)) to glycerol-3-phosphate (G3P) to form lysophosphatidic acid (LPA). This enzyme utilizes acyl-phosphate as fatty acyl donor, but not acyl-CoA or acyl-ACP. The chain is Glycerol-3-phosphate acyltransferase from Lactiplantibacillus plantarum (strain ATCC BAA-793 / NCIMB 8826 / WCFS1) (Lactobacillus plantarum).